The sequence spans 1843 residues: Cilia- and flagella-associated protein 44 (1843 aa).

Positions 1 to 86 (MKEPDDQDTS…PPVEVKEEPE (86 aa)) are disordered. Over residues 29–39 (LKSSQDTTADS) the composition is skewed to polar residues. Positions 41–58 (TDGEESYLGDDLDLDDMD) are enriched in acidic residues. WD repeat units follow at residues 214 to 255 (GAEK…PILR), 258 to 297 (AFSQ…TGLK), 308 to 346 (TSTS…VELC), 353 to 390 (CHSG…TADV), 456 to 495 (FHSG…PLVH), 497 to 541 (KFKQ…GLTV), and 561 to 600 (PHTD…KPIG). The tract at residues 701–726 (REAFGEEEIPEEETSEEGEEEEPPLP) is disordered. A compositionally biased stretch (acidic residues) spans 705–724 (GEEEIPEEETSEEGEEEEPP). 2 WD repeats span residues 790–829 (TEDN…PFLV) and 842–881 (NNYG…IVPK). Disordered stretches follow at residues 1040–1086 (YSKL…SVLE), 1266–1291 (QRKQ…SAGG), and 1488–1524 (KEVE…DDVF). Basic and acidic residues predominate over residues 1047–1071 (SQSERRQSKMERLEKEGPGKKESQR). Phosphoserine is present on Ser1069. Positions 1072–1081 (DTGGSISLQE) are enriched in polar residues. Acidic residues predominate over residues 1492–1524 (GDADEDEESEESSEEESSLESDEDASGSEDDVF). 2 coiled-coil regions span residues 1548–1603 (RLDI…RLNE) and 1631–1665 (LVFS…CRER). One copy of the WD 10 repeat lies at 1699–1744 (IDLEALQTLSVNTTLEELKIKKLRKELSNAKELRMWEEKIAQVRWD).

Belongs to the CFAP44 family. In terms of tissue distribution, expressed in testis.

The protein localises to the cell projection. Its subcellular location is the cilium. The protein resides in the flagellum. It is found in the cytoplasm. It localises to the cytoskeleton. The protein localises to the flagellum axoneme. Functionally, flagellar protein involved in sperm flagellum axoneme organization and function. This Mus musculus (Mouse) protein is Cilia- and flagella-associated protein 44.